The sequence spans 181 residues: dTDP-4-dehydrorhamnose 3,5-epimerase (181 aa).

Substrate is bound by residues Arg23, Glu28, 47 to 49 (QDN), and Arg59. Catalysis depends on His62, which acts as the Proton acceptor. Positions 72 and 119 each coordinate substrate. Catalysis depends on Tyr132, which acts as the Proton donor. Substrate-binding residues include Glu143 and Lys167.

It belongs to the dTDP-4-dehydrorhamnose 3,5-epimerase family. Homodimer.

It catalyses the reaction dTDP-4-dehydro-6-deoxy-alpha-D-glucose = dTDP-4-dehydro-beta-L-rhamnose. The protein operates within carbohydrate biosynthesis; dTDP-L-rhamnose biosynthesis. It functions in the pathway bacterial outer membrane biogenesis; LPS O-antigen biosynthesis. Its function is as follows. Catalyzes the epimerization of the C3' and C5'positions of dTDP-6-deoxy-D-xylo-4-hexulose, forming dTDP-6-deoxy-L-lyxo-4-hexulose. This chain is dTDP-4-dehydrorhamnose 3,5-epimerase (rfbC), found in Shigella flexneri.